The primary structure comprises 232 residues: Chalcone synthase (232 aa).

The active site involves Cys-7.

It belongs to the thiolase-like superfamily. Chalcone/stilbene synthases family.

The catalysed reaction is (E)-4-coumaroyl-CoA + 3 malonyl-CoA + 3 H(+) = 2',4,4',6'-tetrahydroxychalcone + 3 CO2 + 4 CoA. It functions in the pathway secondary metabolite biosynthesis; flavonoid biosynthesis. The primary product of this enzyme is 4,2',4',6'-tetrahydroxychalcone (also termed naringenin-chalcone or chalcone) which can under specific conditions spontaneously isomerize into naringenin. The chain is Chalcone synthase (CHS) from Malus domestica (Apple).